Consider the following 100-residue polypeptide: Small ribosomal subunit protein uS14c (100 aa).

Positions 1-31 (MARKSLIQREKKRQKLEQKYHSIRRSSKKEI) are disordered.

This sequence belongs to the universal ribosomal protein uS14 family. In terms of assembly, part of the 30S ribosomal subunit.

The protein localises to the plastid. Its subcellular location is the chloroplast. Binds 16S rRNA, required for the assembly of 30S particles. This Nicotiana tomentosiformis (Tobacco) protein is Small ribosomal subunit protein uS14c.